The chain runs to 96 residues: UPF0235 protein VIBHAR_03581 (96 aa).

Belongs to the UPF0235 family.

This is UPF0235 protein VIBHAR_03581 from Vibrio campbellii (strain ATCC BAA-1116).